Consider the following 461-residue polypeptide: Probable Xaa-Pro aminopeptidase PEPP (461 aa).

Residues Asp-257, Asp-268, Glu-391, and Glu-431 each coordinate Mn(2+).

The protein belongs to the peptidase M24B family. Mn(2+) serves as cofactor.

The catalysed reaction is Release of any N-terminal amino acid, including proline, that is linked to proline, even from a dipeptide or tripeptide.. Its function is as follows. Catalyzes the removal of a penultimate prolyl residue from the N-termini of peptides. This chain is Probable Xaa-Pro aminopeptidase PEPP (PEPP), found in Colletotrichum graminicola (strain M1.001 / M2 / FGSC 10212) (Maize anthracnose fungus).